The following is a 204-amino-acid chain: MVDFILNAQVRSDLGKGASRRLRRNAGLVPAVVYGGDKEPQSVTLELREIAKLLENEAAFSHVIALNVGGAKETVLIKALQRHPAKGFVMHADFLRVVADHKLTAHVPLHFINEEVAVGVKQAGGEISHTISEVEVSCLPKDLPEFIEVDMAKVELGQIVHLSDLKAPKGVELVQLAHGNDLAVANIHASRVVKEEGSEEGAAE.

It belongs to the bacterial ribosomal protein bL25 family. CTC subfamily. As to quaternary structure, part of the 50S ribosomal subunit; part of the 5S rRNA/L5/L18/L25 subcomplex. Contacts the 5S rRNA. Binds to the 5S rRNA independently of L5 and L18.

In terms of biological role, this is one of the proteins that binds to the 5S RNA in the ribosome where it forms part of the central protuberance. In Pseudomonas aeruginosa (strain LESB58), this protein is Large ribosomal subunit protein bL25.